The primary structure comprises 1169 residues: Protein MBD-R2 (1169 aa).

A THAP-type zinc finger spans residues 5 to 59 (CCVANCPSTSRLLEHNGVTYHSFPLDPIIRAIWIKNSRISLERQITKSVLVCSRH). Disordered stretches follow at residues 99–122 (RALQ…STND), 140–211 (SAER…KYSN), and 347–394 (AEEG…CAPQ). Residues 107 to 122 (EGTTETPGNAQSSTND) are compositionally biased toward polar residues. The span at 140 to 160 (SAERKATEEGKTGKAADDVKN) shows a compositional bias: basic and acidic residues. Over residues 190 to 202 (PAPGSASSSNSPL) the composition is skewed to low complexity. The segment covering 353-363 (KSPTPVGTPVS) has biased composition (polar residues). The region spanning 445 to 514 (KPTVIVQDWR…DVYDFSIHRR (70 aa)) is the MBD domain. The segment at 527-565 (GYNPQPPPKPRPMDVSMNSTLDQSITSQHSLPSTPMPVK) is disordered. Positions 542–559 (SMNSTLDQSITSQHSLPS) are enriched in polar residues. The segment at 640–665 (YVCPREDCAKTYRKEDFLLIHIRHYH) adopts a C2H2-type zinc-finger fold. Positions 714 to 890 (QDLQQSRSFK…INAALAPPPA (177 aa)) are disordered. The segment covering 726–742 (SVSATATSSTPSDITPT) has biased composition (low complexity). Residues 774-784 (PTQSFNPSLSR) are compositionally biased toward polar residues. Positions 798–810 (SGSRKSNRQRSQR) are enriched in basic residues. 2 stretches are compositionally biased toward polar residues: residues 853-862 (AATTPISSID) and 869-881 (SVST…QTDI).

As to quaternary structure, component of the non-specific lethal (NLS) histone acetyltransferase complex at least composed of mof, nls1, dgt1/NSL2, Rcd1/NSL3, Rcd5/MCRS2, MBD-R2 and wds.

The protein localises to the nucleus. It localises to the chromosome. Its function is as follows. Component of the non-specific lethal (NLS) complex, a multiprotein complex that promotes expression of housekeeping genes on X chromosome and autosomes. This chain is Protein MBD-R2, found in Drosophila melanogaster (Fruit fly).